A 416-amino-acid chain; its full sequence is N-carbamoyl-L-amino-acid amidohydrolase (416 aa).

A divalent metal cation is bound by residues His-87, Asp-98, Glu-133, and His-194. Gln-197, His-230, Asn-279, Arg-292, and Gly-361 together coordinate an N-carbamoyl-L-alpha-amino acid. The involved in dimerization stretch occupies residues 213-331 (HCQGLWWLEF…SIEAVGHFDP (119 aa)). His-386 lines the a divalent metal cation pocket.

It belongs to the peptidase M20 family. Homodimer. Mn(2+) is required as a cofactor. The cofactor is Ni(2+). Requires Co(2+) as cofactor. Fe(2+) serves as cofactor.

It catalyses the reaction an N-carbamoyl-L-alpha-amino acid + H2O + 2 H(+) = an L-alpha-amino acid + NH4(+) + CO2. The enzyme catalyses N-carbamoyl-L-methionine + H2O + 2 H(+) = L-methionine + NH4(+) + CO2. It carries out the reaction N-acetyl-L-methionine + H2O = L-methionine + acetate. The catalysed reaction is N(alpha)-formyl-L-methionine + H2O = formate + L-methionine. It catalyses the reaction N-carbamoyl-L-alanine + H2O + 2 H(+) = L-alanine + NH4(+) + CO2. The enzyme catalyses N-carbamoyl-L-cysteine + H2O + 2 H(+) = L-cysteine + NH4(+) + CO2. It carries out the reaction N-carbamoyl-L-tryptophan + H2O + 2 H(+) = L-tryptophan + NH4(+) + CO2. The catalysed reaction is N-carbamoyl-L-valine + H2O + 2 H(+) = L-valine + NH4(+) + CO2. It catalyses the reaction N-carbamoyl-L-phenylalanine + H2O + 2 H(+) = L-phenylalanine + NH4(+) + CO2. Its activity is regulated as follows. Strongly inhibited by Hg(2+), Cu(2+), Zn(2+), Pb(2+) and Fe(3+) ions, and slightly inhibited by Na(+) and K(+) ions. Beta-mercaptoethanol and 5,5'-dithiobis-(2-nitrobenzoic acid)(DTNB) cause 34% and 42% inhibition, respectively. In terms of biological role, catalyzes the hydrolysis of both aliphatic and aromatic N-carbamoyl-L-alpha-amino acids to free L-alpha-amino acids. Is strictly L-specific since it is inactive toward N-carbamoyl-D-alpha-amino acids. Is also able to hydrolyze N-formyl-L-methionine and N-acetyl-L-methionine, but not ureidosuccinate or 3-ureidopropanoate. This Rhizobium meliloti (Ensifer meliloti) protein is N-carbamoyl-L-amino-acid amidohydrolase.